A 700-amino-acid chain; its full sequence is Kin of IRRE-like protein 2 (700 aa).

A signal peptide spans 1 to 19; that stretch reads MLASALLVFLCCFKGHAGS. Residues 20-507 lie on the Extracellular side of the membrane; the sequence is SPHFLQQPED…GRRDLLPTVR (488 aa). Ig-like C2-type domains follow at residues 21 to 115, 120 to 219, 224 to 304, 309 to 391, and 395 to 497; these read PHFL…AQLH, PEAP…VTLS, PMVT…TALE, PILQ…ARLT, and PPVV…QIHL. Residues Cys42 and Cys100 are joined by a disulfide bond. Asn140 is a glycosylation site (N-linked (GlcNAc...) asparagine). Cystine bridges form between Cys143–Cys201 and Cys245–Cys288. Residues 146 to 148 carry the Cell attachment site motif; sequence RGD. Residue Asn298 is glycosylated (N-linked (GlcNAc...) asparagine). 2 disulfide bridges follow: Cys330-Cys372 and Cys416-Cys482. The N-linked (GlcNAc...) asparagine glycan is linked to Asn481. Residues 508–528 form a helical membrane-spanning segment; it reads IVAGAASAATSLLMVITGVVL. The Cytoplasmic portion of the chain corresponds to 529–700; it reads CCWRHGSLSK…PSHQRLQTHV (172 aa). A disordered region spans residues 542–576; the sequence is LVRIPGSSEGSSSRGPEEETGSSEDRGPIVHTDHS. Ser563 carries the post-translational modification Phosphoserine. Basic and acidic residues predominate over residues 564-576; sequence SEDRGPIVHTDHS. Phosphotyrosine is present on residues Tyr595, Tyr596, and Tyr653. The segment at 671-700 is disordered; that stretch reads FGPPELSSGTPPFPYATLSPPSHQRLQTHV. Over residues 689–700 the composition is skewed to polar residues; that stretch reads SPPSHQRLQTHV.

The protein belongs to the immunoglobulin superfamily. Homodimer. Interacts with NPHS2/podocin (via the C-terminus). Interacts with NPHS1 (via the Ig-like domains). Interacts with FYN. Post-translationally, N-glycosylated. Phosphorylated at Ser-548 or Ser-549; due to site ambiguity, the exact position of the serine phosphorylation could not be determined. Phosphorylation at residues Tyr-631 and/or Tyr-632. FYN mediates tyrosine phosphorylation in pancreatic beta-cells. In terms of processing, the extracellular domain is cleaved leading to the generation of a soluble fragment and a membrane-bound C-terminal fragment, which is further cleaved by gamma-secretase. As to expression, highly expressed in beta-cells of the pancreatic islets. Expression is seen in podocytes of kidney glomeruli, and in the cerebellum and hindbrain at 12.5 dpc, in the spinal cord at 10.5 dpc, and in retina and hypothalamus at 13.5 dpc.

The protein resides in the cell membrane. Its function is as follows. May regulate basal insulin secretion. The polypeptide is Kin of IRRE-like protein 2 (Kirrel2) (Mus musculus (Mouse)).